A 631-amino-acid chain; its full sequence is Pescadillo homolog (631 aa).

Residues 321 to 414 (RLRTLFKGLK…QLLPTNDYFL (94 aa)) form the BRCT domain. Residues 428 to 442 (SKRDSYIPPEEKALH) show a composition bias toward basic and acidic residues. Disordered stretches follow at residues 428–471 (SKRD…EADQ), 489–561 (YKKY…VDEH), and 602–631 (ADNKEAKKAAKREARKQAAEAAARAAKLVK). 2 positions are modified to phosphoserine: Ser-453 and Ser-457. 2 stretches are compositionally biased toward acidic residues: residues 453–471 (SEEESEEDEAEKEEEEADQ) and 498–525 (VNEDEEDLSEEDDEEDDDEEDVDKEDVD). The segment covering 526 to 538 (EQTKRKQQEKEKM) has biased composition (basic and acidic residues). Positions 544 to 553 (KVHKVNKRQV) are enriched in basic residues. Residues 591 to 631 (WLLRKKRRNIDADNKEAKKAAKREARKQAAEAAARAAKLVK) are a coiled coil. Positions 602-619 (ADNKEAKKAAKREARKQA) are enriched in basic and acidic residues. Residues 620-631 (AEAAARAAKLVK) are compositionally biased toward low complexity.

It belongs to the pescadillo family.

The protein resides in the nucleus. It localises to the nucleolus. It is found in the nucleoplasm. In terms of biological role, required for maturation of ribosomal RNAs and formation of the large ribosomal subunit. The protein is Pescadillo homolog of Drosophila pseudoobscura pseudoobscura (Fruit fly).